Consider the following 433-residue polypeptide: Trigger factor (433 aa).

A PPIase FKBP-type domain is found at 163–248; it reads GNFVVIDFVG…VKEAKVKELP (86 aa).

Belongs to the FKBP-type PPIase family. Tig subfamily.

The protein localises to the cytoplasm. The catalysed reaction is [protein]-peptidylproline (omega=180) = [protein]-peptidylproline (omega=0). Functionally, involved in protein export. Acts as a chaperone by maintaining the newly synthesized protein in an open conformation. Functions as a peptidyl-prolyl cis-trans isomerase. The polypeptide is Trigger factor (Geobacter metallireducens (strain ATCC 53774 / DSM 7210 / GS-15)).